A 125-amino-acid polypeptide reads, in one-letter code: Ribosome-binding factor A (125 aa).

Belongs to the RbfA family. In terms of assembly, monomer. Binds 30S ribosomal subunits, but not 50S ribosomal subunits or 70S ribosomes.

Its subcellular location is the cytoplasm. Functionally, one of several proteins that assist in the late maturation steps of the functional core of the 30S ribosomal subunit. Associates with free 30S ribosomal subunits (but not with 30S subunits that are part of 70S ribosomes or polysomes). Required for efficient processing of 16S rRNA. May interact with the 5'-terminal helix region of 16S rRNA. The chain is Ribosome-binding factor A from Kosmotoga olearia (strain ATCC BAA-1733 / DSM 21960 / TBF 19.5.1).